The chain runs to 311 residues: Probable protein phosphatase 2C 59 (311 aa).

Residues 1–14 (MGYLNSVLSSSSQV) show a composition bias toward low complexity. A disordered region spans residues 1–26 (MGYLNSVLSSSSQVHSDDGPVSGGGL). The PPM-type phosphatase domain occupies 33 to 279 (SYGYASSPGK…DNITCVVVRF (247 aa)). The Mn(2+) site is built by Asp69, Gly70, Asp231, and Asp270.

Belongs to the PP2C family. As to quaternary structure, interacts with the Pseudomonas syringae pv. maculicola effector HopW1-1 (via C-terminus). The cofactor is Mg(2+). Mn(2+) is required as a cofactor.

It catalyses the reaction O-phospho-L-seryl-[protein] + H2O = L-seryl-[protein] + phosphate. The enzyme catalyses O-phospho-L-threonyl-[protein] + H2O = L-threonyl-[protein] + phosphate. Its activity is regulated as follows. Inhibited by sodium fluoride (NaF). Its function is as follows. Protein phosphatase that modulates defense response to pathogenic bacteria, conferring resistance and promoting salicylic acid (SA) accumulation. The protein is Probable protein phosphatase 2C 59 (WIN2) of Arabidopsis thaliana (Mouse-ear cress).